The following is a 287-amino-acid chain: Thioredoxin-related transmembrane protein 2 (287 aa).

An N-terminal signal peptide occupies residues Met1 to Ala13. At Ala14 to Met112 the chain is on the extracellular side. The helical transmembrane segment at Gly113–Leu133 threads the bilayer. Residues Gly134–Gln287 are Cytoplasmic-facing. The Thioredoxin domain occupies His137 to Ser209. A Di-lysine motif motif is present at residues Lys284 to Gln287.

Monomer. Homodimer; disulfide-linked. Occurs in both reduced and oxidized monomeric form. Oxidative conditions increase homodimerization.

The protein resides in the endoplasmic reticulum membrane. It is found in the mitochondrion membrane. Functionally, endoplasmic reticulum and mitochondria-associated protein that probably functions as a regulator of cellular redox state and thereby regulates protein post-translational modification, protein folding and mitochondrial activity. This is Thioredoxin-related transmembrane protein 2 (tmx2) from Xenopus laevis (African clawed frog).